A 524-amino-acid polypeptide reads, in one-letter code: Tissue-resident T-cell transcription regulator protein ZNF683 (524 aa).

The segment covering 130–142 (NKDKLGKQPERAG) has biased composition (basic and acidic residues). Disordered regions lie at residues 130–166 (NKDK…NRKS) and 265–303 (QALP…LSSQ). C2H2-type zinc fingers lie at residues 322 to 344 (YECN…LRVH) and 350 to 372 (FQCA…HLVH). The segment at 398–420 (REREVCHKRFSSSSNLKTHLRLH) adopts a C2H2-type 3; degenerate zinc-finger fold. The C2H2-type 4 zinc-finger motif lies at 426–448 (FQCSVCRSRFTQHIHLKLHHRLH).

The protein belongs to the krueppel C2H2-type zinc-finger protein family. In terms of tissue distribution, expressed in terminally differentiated effector CD8(+) T-cells, but not in naive and central memory cells. Expressed in terminally differentiated natural killer (NK) cells and natural killer (NKT) T-cells (at protein level). Expressed strongly in effector-type CD8(+) T-cells and weakly in naive and memory CD8(+) T-cells. Expressed in terminally differentiated natural killer (NK) cells. Isoform 2 is strongly expressed in effector CD8(+) T and natural killer (NK) cells. Isoform 1 is expressed in effector CD8(+) T and natural killer (NK) cells. As to expression, (Microbial infection) Expressed in cytomegalovirus (CMV)-infected effector CD8(+) T-cells (at protein level).

It localises to the nucleus. Its function is as follows. Transcription factor that mediates a transcriptional program in various innate and adaptive immune tissue-resident lymphocyte T-cell types such as tissue-resident memory T (Trm), natural killer (trNK) and natural killer T (NKT) cells and negatively regulates gene expression of proteins that promote the egress of tissue-resident T-cell populations from non-lymphoid organs. Plays a role in the development, retention and long-term establishment of adaptive and innate tissue-resident lymphocyte T cell types in non-lymphoid organs, such as the skin and gut, but also in other nonbarrier tissues like liver and kidney, and therefore may provide immediate immunological protection against reactivating infections or viral reinfection. Also plays a role in the differentiation of both thymic and peripheral NKT cells. Negatively regulates the accumulation of interferon-gamma (IFN-gamma) in NKT cells at steady state or after antigenic stimulation. Positively regulates granzyme B production in NKT cells after innate stimulation. Associates with the transcriptional repressor PRDM1/BLIMP1 to chromatin at gene promoter regions. Functionally, lacks transcriptional repressor activity. Binds to DNA within promoter regions of the transcriptional repressor PRDM1/BLIMP1 target sites. Unable to regulate interferon-gamma (IFN-gamma) production in cytomegalovirus (CMV)-infected effector CD8(+) T-cells. In terms of biological role, transcriptional repressor that binds to DNA within promoter regions of the transcriptional repressor PRDM1/BLIMP1 target sites. Regulates interferon-gamma (IFN-gamma) production in cytomegalovirus (CMV)-infected effector CD8(+) T cells. The chain is Tissue-resident T-cell transcription regulator protein ZNF683 from Homo sapiens (Human).